The sequence spans 1304 residues: Probable inactive serine/threonine-protein kinase fnkC (1304 aa).

Residues Phe33–Ile402 form the Protein kinase domain. ATP contacts are provided by residues Leu39–Thr47 and Lys68. The segment at Lys208–Glu277 is disordered. The segment covering Asn210 to Ala269 has biased composition (low complexity). FNIP repeat units lie at residues His514–Asp556, Phe710–Cys753, Phe754–Gln797, Tyr798–Ser841, and Tyr900–Asp943. MATH domains are found at residues Gln1025–Ala1154 and Asn1172–Ile1291.

The protein belongs to the protein kinase superfamily. STE Ser/Thr protein kinase family.

The chain is Probable inactive serine/threonine-protein kinase fnkC (fnkC) from Dictyostelium discoideum (Social amoeba).